The primary structure comprises 373 residues: UDP-N-acetylglucosamine--N-acetylmuramyl-(pentapeptide) pyrophosphoryl-undecaprenol N-acetylglucosamine transferase (373 aa).

UDP-N-acetyl-alpha-D-glucosamine-binding positions include threonine 15–glycine 17, asparagine 126, arginine 170, serine 198, and glutamine 300.

The protein belongs to the glycosyltransferase 28 family. MurG subfamily.

The protein localises to the cell inner membrane. It carries out the reaction di-trans,octa-cis-undecaprenyl diphospho-N-acetyl-alpha-D-muramoyl-L-alanyl-D-glutamyl-meso-2,6-diaminopimeloyl-D-alanyl-D-alanine + UDP-N-acetyl-alpha-D-glucosamine = di-trans,octa-cis-undecaprenyl diphospho-[N-acetyl-alpha-D-glucosaminyl-(1-&gt;4)]-N-acetyl-alpha-D-muramoyl-L-alanyl-D-glutamyl-meso-2,6-diaminopimeloyl-D-alanyl-D-alanine + UDP + H(+). The protein operates within cell wall biogenesis; peptidoglycan biosynthesis. Cell wall formation. Catalyzes the transfer of a GlcNAc subunit on undecaprenyl-pyrophosphoryl-MurNAc-pentapeptide (lipid intermediate I) to form undecaprenyl-pyrophosphoryl-MurNAc-(pentapeptide)GlcNAc (lipid intermediate II). This chain is UDP-N-acetylglucosamine--N-acetylmuramyl-(pentapeptide) pyrophosphoryl-undecaprenol N-acetylglucosamine transferase, found in Methylobacterium nodulans (strain LMG 21967 / CNCM I-2342 / ORS 2060).